Consider the following 564-residue polypeptide: Serine/threonine-protein kinase DBF20 (564 aa).

Position 17 is a phosphoserine (Ser-17). Residues 24-62 (LNIPKPTSPQAQYRPARKSENGRLTPGLPRSYKPCDSDD) are disordered. The 301-residue stretch at 169–469 (FQILTQVGQG…FEQVRKMSYF (301 aa)) folds into the Protein kinase domain. Residues 175 to 183 (VGQGGYGQV) and Lys-198 each bind ATP. Asp-292 serves as the catalytic Proton acceptor. Ser-366 carries the phosphoserine modification. Residues 470 to 547 (AEINFETLRT…RHRDGKQGSS (78 aa)) form the AGC-kinase C-terminal domain. Thr-536 bears the Phosphothreonine mark.

The protein belongs to the protein kinase superfamily. Ser/Thr protein kinase family.

The enzyme catalyses L-seryl-[protein] + ATP = O-phospho-L-seryl-[protein] + ADP + H(+). It carries out the reaction L-threonyl-[protein] + ATP = O-phospho-L-threonyl-[protein] + ADP + H(+). Its function is as follows. Is probably a Ser/Thr-protein kinase that may function in initiation of DNA synthesis and also in late nuclear division. This Saccharomyces cerevisiae (strain ATCC 204508 / S288c) (Baker's yeast) protein is Serine/threonine-protein kinase DBF20 (DBF20).